The following is a 505-amino-acid chain: Maturase K (505 aa).

It belongs to the intron maturase 2 family. MatK subfamily.

It is found in the plastid. The protein resides in the chloroplast. Its function is as follows. Usually encoded in the trnK tRNA gene intron. Probably assists in splicing its own and other chloroplast group II introns. The protein is Maturase K of Beta vulgaris (Sugar beet).